The chain runs to 475 residues: Ribulose bisphosphate carboxylase large chain (475 aa).

The propeptide occupies 1 to 2; the sequence is MS. At proline 3 the chain carries N-acetylproline. Lysine 14 carries the N6,N6,N6-trimethyllysine modification. 2 residues coordinate substrate: asparagine 123 and threonine 173. The active-site Proton acceptor is lysine 175. Lysine 177 provides a ligand contact to substrate. Mg(2+) is bound by residues lysine 201, aspartate 203, and glutamate 204. Lysine 201 is modified (N6-carboxylysine). Histidine 294 serves as the catalytic Proton acceptor. Positions 295, 327, and 379 each coordinate substrate.

Belongs to the RuBisCO large chain family. Type I subfamily. In terms of assembly, heterohexadecamer of 8 large chains and 8 small chains; disulfide-linked. The disulfide link is formed within the large subunit homodimers. It depends on Mg(2+) as a cofactor. In terms of processing, the disulfide bond which can form in the large chain dimeric partners within the hexadecamer appears to be associated with oxidative stress and protein turnover.

It localises to the plastid. It is found in the chloroplast. The catalysed reaction is 2 (2R)-3-phosphoglycerate + 2 H(+) = D-ribulose 1,5-bisphosphate + CO2 + H2O. The enzyme catalyses D-ribulose 1,5-bisphosphate + O2 = 2-phosphoglycolate + (2R)-3-phosphoglycerate + 2 H(+). Functionally, ruBisCO catalyzes two reactions: the carboxylation of D-ribulose 1,5-bisphosphate, the primary event in carbon dioxide fixation, as well as the oxidative fragmentation of the pentose substrate in the photorespiration process. Both reactions occur simultaneously and in competition at the same active site. The sequence is that of Ribulose bisphosphate carboxylase large chain from Liquidambar styraciflua (Sweetgum tree).